The chain runs to 74 residues: Acyclotide phyb-K (74 aa).

Residues 1 to 24 (MARVNSLKCALCFIVLILFVQLNC) form the signal peptide. Positions 25-43 (IPETRVMAVELSRVFLQTS) are excised as a propeptide. 3 cysteine pairs are disulfide-bonded: C47-C64, C51-C66, and C56-C71.

In terms of processing, contains 3 disulfide bonds. In terms of tissue distribution, expressed in midvein, lamina and periphery of leaves (at protein level).

Its function is as follows. Probably participates in a plant defense mechanism. The chain is Acyclotide phyb-K from Petunia hybrida (Petunia).